The primary structure comprises 20 residues: Fibrinolytic zinc metalloproteinase (20 aa).

The 14-residue stretch at 7–20 (RYVQLVITVDHVMN) folds into the Peptidase M12B domain.

Requires Zn(2+) as cofactor.

The protein resides in the secreted. Hydrolyzes alpha and beta chains of human fibrinogen and human fibrin. No activity against the gamma chain of human fibrinogen, human thrombin, bovine serum albumin, ovalbumin and hemoglobin. Has anticoagulant activity on human plasma and protects mice against death due from experimentally induced platelet thromboembolism with an ED(50) of 40 ug/kg. The polypeptide is Fibrinolytic zinc metalloproteinase (Ganoderma lucidum (Ling zhi medicinal fungus)).